The primary structure comprises 118 residues: SPbeta prophage-derived uncharacterized protein YoqR (118 aa).

This Bacillus subtilis (strain 168) protein is SPbeta prophage-derived uncharacterized protein YoqR (yoqR).